Consider the following 103-residue polypeptide: Matrix Gla protein (103 aa).

A signal peptide spans 1 to 19 (MKSLLLLSVLAALAVAALC). Position 21 is a 4-carboxyglutamate (E21). Phosphoserine is present on residues S22, S25, and S28. Residues 51–97 (RAKAQERIRELNKPPYELNREACDDYKLCERYAMVYGYNAAYNRYFR) form the Gla domain. A 4-carboxyglutamate mark is found at E56, E60, E67, and E71. An intrachain disulfide couples C73 to C79.

Belongs to the osteocalcin/matrix Gla protein family. Post-translationally, requires vitamin K-dependent gamma-carboxylation for its function.

It is found in the secreted. Functionally, associates with the organic matrix of bone and cartilage. Thought to act as an inhibitor of bone formation. The chain is Matrix Gla protein (MGP) from Sus scrofa (Pig).